A 114-amino-acid polypeptide reads, in one-letter code: Protein lin-52 homolog (114 aa).

2 positions are modified to phosphoserine: S26 and S51.

Belongs to the lin-52 family. As to quaternary structure, component of the DREAM complex (also named LINC complex) at least composed of E2F4, E2F5, LIN9, LIN37, LIN52, LIN54, MYBL1, MYBL2, RBL1, RBL2, RBBP4, TFDP1 and TFDP2. The complex exists in quiescent cells where it represses cell cycle-dependent genes. It dissociates in S phase when LIN9, LIN37, LIN52 and LIN54 form a subcomplex that binds to MYBL2.

The polypeptide is Protein lin-52 homolog (LIN52) (Pongo abelii (Sumatran orangutan)).